The sequence spans 317 residues: Zinc finger protein 771 (317 aa).

Acidic residues predominate over residues 1–17; that stretch reads MPGEQQAEEEEEEEMQE. The segment at 1–63 is disordered; that stretch reads MPGEQQAEEE…APSADPARPH (63 aa). A Glycyl lysine isopeptide (Lys-Gly) (interchain with G-Cter in SUMO2) cross-link involves residue K33. Over residues 33–49 the composition is skewed to basic and acidic residues; sequence KYEVVKLKIPMDNKEVP. 8 C2H2-type zinc fingers span residues 63–85, 91–113, 119–141, 147–169, 175–197, 203–225, 231–253, and 259–281; these read HACP…ARTH, FGCT…GRTH, YECP…RRRH, YACA…LRVH, YACP…RRTH, YACA…RRVH, HRCA…ARTH, and YPCA…RRAH.

Belongs to the krueppel C2H2-type zinc-finger protein family.

The protein localises to the nucleus. In terms of biological role, may be involved in transcriptional regulation. The sequence is that of Zinc finger protein 771 (ZNF771) from Homo sapiens (Human).